The primary structure comprises 67 residues: Conotoxin Cl6.10 (67 aa).

Positions 1 to 24 (MKLTCVLIAAVLLLAVCQLDSADA) are cleaved as a signal peptide. A propeptide spanning residues 25–37 (TAYMRKDPSLRSP) is cleaved from the precursor. Disulfide bonds link C43/C57, C50/C61, and C56/C65.

This sequence belongs to the conotoxin O1 superfamily. As to expression, expressed by the venom duct.

The protein localises to the secreted. In Californiconus californicus (California cone), this protein is Conotoxin Cl6.10.